A 403-amino-acid polypeptide reads, in one-letter code: Transcription factor E2F1 (403 aa).

Positions 44 to 85 (ATPQPSRPGPAPRRPALGRPPVKRKLNLETDHQYIAESLPAA) are cyclin A/CDK2 binding. The tract at residues 45-64 (TPQPSRPGPAPRRPALGRPP) is disordered. A DNA-binding region spans residues 87 to 171 (GRARIPGRGA…KNNIQWLGSQ (85 aa)). The segment at 130–151 (LNWAAEVLKVQKRRIYDITNVL) is leucine-zipper. A DEF box motif is present at residues 135 to 171 (EVLKVQKRRIYDITNVLEGIQLITKKSKNNIQWLGSQ). The segment at 172 to 261 (VAAGASSRQR…VSDPGEAFQV (90 aa)) is dimerization. A transactivation region spans residues 335 to 403 (PTEDVSLSPL…DFGDFTHLDF (69 aa)). A retinoblastoma protein RB1 binding region spans residues 375–392 (QDYHFGLEEGEGISELFD).

It belongs to the E2F/DP family. Component of the DRTF1/E2F transcription factor complex. Forms heterodimers with DP family members. The E2F1 complex binds specifically hypophosphorylated RB1, the interaction represses E2F1-driven transcription. During the cell cycle, RB1 becomes phosphorylated in mid-to-late G1 phase, detaches from the DRTF1/E2F complex, rendering E2F transcriptionally active. Viral oncoproteins, notably E1A, T-antigen and HPV E7, are capable of sequestering RB1, thus releasing the active complex.

It localises to the nucleus. In terms of biological role, transcription activator that binds DNA cooperatively with DP proteins through the E2 recognition site, 5'-TTTC[CG]CGC-3' found in the promoter region of a number of genes whose products are involved in cell cycle regulation or in DNA replication. The DRTF1/E2F complex functions in the control of cell-cycle progression from G1 to S phase. E2F1 binds preferentially RB1 in a cell-cycle dependent manner. It can mediate both cell proliferation and TP53/p53-dependent apoptosis. Blocks adipocyte differentiation by binding to specific promoters repressing CEBPA binding to its target gene promoters. Positively regulates transcription of RRP1B. The chain is Transcription factor E2F1 from Gallus gallus (Chicken).